A 285-amino-acid polypeptide reads, in one-letter code: Transcription factor E2F6 (285 aa).

A Glycyl lysine isopeptide (Lys-Gly) (interchain with G-Cter in SUMO2) cross-link involves residue Lys-9. Residues Tyr-50–Ser-129 mediate DNA binding. Positions Lys-95–Ser-129 match the DEF box motif. Residues Asp-130 to Val-222 form a dimerization region. The tract at residues Leu-143 to Cys-164 is leucine-zipper. A transcription repression region spans residues Asp-173–Asn-285. The disordered stretch occupies residues Gln-240–Asn-285. Residues Gly-241–Ser-259 show a composition bias toward polar residues. Residues Lys-260–Asn-272 show a composition bias toward basic and acidic residues.

It belongs to the E2F/DP family. In terms of assembly, forms heterodimers with DP family members TFDP1 or TFDP2. Component of the DRTF1/E2F transcription factor complex. Part of the E2F6.com-1 complex in G0 phase composed of E2F6, MGA, MAX, TFDP1, CBX3, BAT8, EUHMTASE1, RING1, RNF2, MBLR, L3MBTL2 and YAF2. Component of some MLL1/MLL complex, at least composed of the core components KMT2A/MLL1, ASH2L, HCFC1/HCF1, WDR5 and RBBP5, as well as the facultative components BACC1, CHD8, E2F6, HSP70, INO80C, KANSL1, LAS1L, MAX, MCRS1, MGA, KAT8/MOF, PELP1, PHF20, PRP31, RING2, RUVB1/TIP49A, RUVB2/TIP49B, SENP3, TAF1, TAF4, TAF6, TAF7, TAF9 and TEX10.

Its subcellular location is the nucleus. Inhibitor of E2F-dependent transcription. Binds DNA cooperatively with DP proteins through the E2 recognition site, 5'-TTTC[CG]CGC-3'. Has a preference for the 5'-TTTCCCGC-3' E2F recognition site. E2F6 lacks the transcriptional activation and pocket protein binding domains. Appears to regulate a subset of E2F-dependent genes whose products are required for entry into the cell cycle but not for normal cell cycle progression. Represses expression of some meiosis-specific genes, including SLC25A31/ANT4. May silence expression via the recruitment of a chromatin remodeling complex containing histone H3-K9 methyltransferase activity. Overexpression delays the exit of cells from the S-phase. The protein is Transcription factor E2F6 of Bos taurus (Bovine).